A 450-amino-acid polypeptide reads, in one-letter code: Solute carrier family 52, riboflavin transporter, member 2 (450 aa).

5 helical membrane passes run 14–34 (LLVA…WVEL), 47–67 (LPSY…LVTL), 79–99 (IPIQ…APLW), 114–136 (FLTL…LPFL), and 147–167 (FFLG…AQGV). An N-linked (GlcNAc...) asparagine glycan is attached at asparagine 178. Residues 201-221 (FFWVLTALLGTSAAAFQGLLL) form a helical membrane-spanning segment. The disordered stretch occupies residues 230–268 (ATMGTGLRVETPGTEEEEEEEEASPLQEPPGQVASIVSS). The segment covering 242 to 252 (GTEEEEEEEEA) has biased composition (acidic residues). Transmembrane regions (helical) follow at residues 282 to 302 (ACLL…LPAV), 317 to 337 (LAVV…MAVL), 344 to 364 (LYGL…LAVL), 371 to 391 (VGTS…AGVF), and 409 to 429 (ALLA…IAMF).

Belongs to the riboflavin transporter family. Highly expressed in the placenta and small intestine, moderately in the kidney, colon, lung, prostate, uterus, and thymus, and weakly in all other tissues.

Its subcellular location is the cell membrane. It carries out the reaction riboflavin(in) = riboflavin(out). Riboflavin transport is Na(+)-independent but moderately pH-sensitive. Activity is strongly inhibited by riboflavin analogs, such as lumiflavin. Weakly inhibited by flavin adenine dinucleotide (FAD) and flavin mononucleotide (FMN). In terms of biological role, plasma membrane transporter mediating the uptake by cells of the water soluble vitamin B2/riboflavin that plays a key role in biochemical oxidation-reduction reactions of the carbohydrate, lipid, and amino acid metabolism. May also act as a receptor for 4-hydroxybutyrate. The chain is Solute carrier family 52, riboflavin transporter, member 2 (Slc52a2) from Rattus norvegicus (Rat).